The sequence spans 193 residues: dCTP deaminase (193 aa).

Residues 110 to 115 (RSSLAR), aspartate 128, 136 to 138 (VLE), tyrosine 171, lysine 178, and glutamine 182 contribute to the dCTP site. The active-site Proton donor/acceptor is glutamate 138. Basic and acidic residues predominate over residues 170–181 (PYNRRQDAKYRD). The interval 170–193 (PYNRRQDAKYRDQQGAVASRIDKD) is disordered.

It belongs to the dCTP deaminase family. Homotrimer.

It catalyses the reaction dCTP + H2O + H(+) = dUTP + NH4(+). It functions in the pathway pyrimidine metabolism; dUMP biosynthesis; dUMP from dCTP (dUTP route): step 1/2. Catalyzes the deamination of dCTP to dUTP. This Enterobacter sp. (strain 638) protein is dCTP deaminase.